Consider the following 873-residue polypeptide: Leucine--tRNA ligase (873 aa).

The short motif at 47 to 57 (PYPSGKLHMGH) is the 'HIGH' region element. The 'KMSKS' region signature appears at 636–640 (KMSKS). Residue Lys639 coordinates ATP.

The protein belongs to the class-I aminoacyl-tRNA synthetase family.

The protein localises to the cytoplasm. The catalysed reaction is tRNA(Leu) + L-leucine + ATP = L-leucyl-tRNA(Leu) + AMP + diphosphate. The polypeptide is Leucine--tRNA ligase (Acinetobacter baylyi (strain ATCC 33305 / BD413 / ADP1)).